The primary structure comprises 410 residues: Putative ribonuclease E (410 aa).

In terms of domain architecture, S1 motif spans 39 to 119; that stretch reads SNIYKGKIVR…GTKGALLTTF (81 aa). Mg(2+) is bound by residues aspartate 303 and aspartate 346.

It belongs to the RNase E/G family. RNase E subfamily. Component of the RNA degradosome, which is a multiprotein complex involved in RNA processing and mRNA degradation. Within the RNA degradosome, RNase E assembles into a homotetramer formed by a dimer of dimers. The cofactor is Mg(2+).

The protein resides in the cytoplasm. Its subcellular location is the cell inner membrane. The catalysed reaction is Endonucleolytic cleavage of single-stranded RNA in A- and U-rich regions.. Endoribonuclease that plays a central role in RNA processing and decay. Required for the maturation of 5S and 16S rRNAs and the majority of tRNAs. Also involved in the degradation of most mRNAs. The chain is Putative ribonuclease E (rne) from Buchnera aphidicola subsp. Baizongia pistaciae (strain Bp).